Consider the following 292-residue polypeptide: Pantothenate synthetase (292 aa).

30-37 serves as a coordination point for ATP; the sequence is MGALHEGH. The active-site Proton donor is His-37. Gln-61 contacts (R)-pantoate. A beta-alanine-binding site is contributed by Gln-61. 147–150 provides a ligand contact to ATP; that stretch reads GEKD. A (R)-pantoate-binding site is contributed by Gln-153. 184–187 is an ATP binding site; that stretch reads VSSR.

Belongs to the pantothenate synthetase family. As to quaternary structure, homodimer.

It localises to the cytoplasm. The catalysed reaction is (R)-pantoate + beta-alanine + ATP = (R)-pantothenate + AMP + diphosphate + H(+). The protein operates within cofactor biosynthesis; (R)-pantothenate biosynthesis; (R)-pantothenate from (R)-pantoate and beta-alanine: step 1/1. Functionally, catalyzes the condensation of pantoate with beta-alanine in an ATP-dependent reaction via a pantoyl-adenylate intermediate. The sequence is that of Pantothenate synthetase from Chlorobium phaeovibrioides (strain DSM 265 / 1930) (Prosthecochloris vibrioformis (strain DSM 265)).